The following is a 608-amino-acid chain: Amino-acid acetyltransferase, mitochondrial (608 aa).

Residues 402-604 form the N-acetyltransferase domain; that stretch reads LNLITEHEKG…DICTRIEPSL (203 aa).

It belongs to the acetyltransferase family.

The protein localises to the mitochondrion. It catalyses the reaction L-glutamate + acetyl-CoA = N-acetyl-L-glutamate + CoA + H(+). It participates in amino-acid biosynthesis; L-arginine biosynthesis; N(2)-acetyl-L-ornithine from L-glutamate: step 1/4. N-acetylglutamate synthase involved in arginine biosynthesis. This is Amino-acid acetyltransferase, mitochondrial (ARG2) from Yarrowia lipolytica (strain CLIB 122 / E 150) (Yeast).